The primary structure comprises 875 residues: Alanine--tRNA ligase (875 aa).

Zn(2+) contacts are provided by H564, H568, C666, and H670.

It belongs to the class-II aminoacyl-tRNA synthetase family. Homotetramer. Requires Zn(2+) as cofactor.

Its subcellular location is the cytoplasm. It carries out the reaction tRNA(Ala) + L-alanine + ATP = L-alanyl-tRNA(Ala) + AMP + diphosphate. In terms of biological role, catalyzes the attachment of alanine to tRNA(Ala) in a two-step reaction: alanine is first activated by ATP to form Ala-AMP and then transferred to the acceptor end of tRNA(Ala). Also edits incorrectly charged Ser-tRNA(Ala) and Gly-tRNA(Ala) via its editing domain. This Serratia proteamaculans (strain 568) protein is Alanine--tRNA ligase.